The primary structure comprises 411 residues: 2,3-bisphosphoglycerate-independent phosphoglycerate mutase (411 aa).

The protein belongs to the BPG-independent phosphoglycerate mutase family. A-PGAM subfamily.

It catalyses the reaction (2R)-2-phosphoglycerate = (2R)-3-phosphoglycerate. The protein operates within carbohydrate degradation; glycolysis; pyruvate from D-glyceraldehyde 3-phosphate: step 3/5. In terms of biological role, catalyzes the interconversion of 2-phosphoglycerate and 3-phosphoglycerate. The chain is 2,3-bisphosphoglycerate-independent phosphoglycerate mutase from Pyrobaculum neutrophilum (strain DSM 2338 / JCM 9278 / NBRC 100436 / V24Sta) (Thermoproteus neutrophilus).